Reading from the N-terminus, the 364-residue chain is Trans-enoyl reductase ccsC (364 aa).

52-55 provides a ligand contact to NADP(+); that stretch reads CDYK. 141–148 contacts substrate; sequence TGLATLGM. Residues 176–179, 199–202, Tyr217, and 264–265 each bind NADP(+); these read SSSV, SPRN, and LE. 284–288 contributes to the substrate binding site; sequence GPALL. 353-354 provides a ligand contact to NADP(+); sequence VS.

Belongs to the zinc-containing alcohol dehydrogenase family. As to quaternary structure, monomer.

The protein operates within mycotoxin biosynthesis. In terms of biological role, trans-enoyl reductase; part of the gene cluster that mediates the biosynthesis of a family of the mycotoxins cytochalasins E and K. The hybrid PKS-NRPS synthetase ccsA and the enoyl reductase ccsC are responsible for fusion of phenylalanine with an octaketide backbone and subsequent release of the stable tetramic acid precursor. The polyketide synthase module (PKS) of the PKS-NRPS ccsA is responsible for the synthesis of the octaketide backbone. The downstream nonribosomal peptide synthetase (NRPS) amidates the carboxyl end of the octaketide with a phenylalanine. A reductase-like domain (R) at the C-terminus catalyzes the reductive release of the polyketide-amino acid intermediate. Because ccsA lacks a designated enoylreductase (ER) domain, the required activity is provided the enoyl reductase ccsC. Upon formation of the 11-membered carbocycle-fused perhydroisoindolone intermediate, a number of oxidative steps are required to afford the final cytochalasin E and K, including two hydroxylations at C17 and C18, one alcohol oxidation at C17, one epoxidation at C6 and C7 and two Baeyer-Villiger oxidations. The oxidative modification at C17, C18 and the C6-C7 epoxidation are likely to be catalyzed by the two cytochrome P450 oxygenases ccsD and ccsG. CcsD may be responsible for the epoxidation of the C6-C7 double bond. CcsG may be responsible for the successive oxidative modifications at C17 and C18. The double Baeyer-Villiger oxidations of ketocytochalasin to precytochalasin and cytochalasin Z(16) are among the final steps leading to cytochalasin E and K and are catalyzed by ccsB. The first oxygen insertion step follows that of the classic BVMO mechanism, generating the ester precytochalasin. Release of precytochalasin into an aqueous environment can generate the shunt product iso-precytochalasin through spontaneous isomerization. Alternatively, precytochalasin can undergo further oxidation by ccsB to yield the in-line carbonate-containing cytochalasin Z(16). Cytochalasin Z(16) is a precursor to cytochalasin E and cytochalasin K, whereas iso-precytochalasin is a precursor to cytochalasin Z(17) and rosellichalasin. The hydrolyase ccsE may catalyze hydrolysis of epoxide bond in cytochalasin E to afford cytochalasin K. The function of ccsF has not been assigned but it may play a role in post-PKS-NRPS biosynthetic step, resistance or transport of cytochalasins and related PKS-NRPS products. The polypeptide is Trans-enoyl reductase ccsC (Aspergillus clavatus (strain ATCC 1007 / CBS 513.65 / DSM 816 / NCTC 3887 / NRRL 1 / QM 1276 / 107)).